Consider the following 244-residue polypeptide: Geranylgeranylglyceryl phosphate synthase (244 aa).

Residues aspartate 20 and serine 49 each contribute to the Mg(2+) site. Sn-glycerol 1-phosphate-binding positions include 169–175 (YLEAGSG), 200–201 (GG), and 222–223 (GT).

This sequence belongs to the GGGP/HepGP synthase family. Group II subfamily. Mg(2+) is required as a cofactor.

It is found in the cytoplasm. It catalyses the reaction sn-glycerol 1-phosphate + (2E,6E,10E)-geranylgeranyl diphosphate = sn-3-O-(geranylgeranyl)glycerol 1-phosphate + diphosphate. Its pathway is membrane lipid metabolism; glycerophospholipid metabolism. Its function is as follows. Prenyltransferase that catalyzes the transfer of the geranylgeranyl moiety of geranylgeranyl diphosphate (GGPP) to the C3 hydroxyl of sn-glycerol-1-phosphate (G1P). This reaction is the first ether-bond-formation step in the biosynthesis of archaeal membrane lipids. In Korarchaeum cryptofilum (strain OPF8), this protein is Geranylgeranylglyceryl phosphate synthase.